The following is a 326-amino-acid chain: Phosphate acyltransferase (326 aa).

Belongs to the PlsX family. As to quaternary structure, homodimer. Probably interacts with PlsY.

The protein resides in the cytoplasm. It carries out the reaction a fatty acyl-[ACP] + phosphate = an acyl phosphate + holo-[ACP]. Its pathway is lipid metabolism; phospholipid metabolism. Catalyzes the reversible formation of acyl-phosphate (acyl-PO(4)) from acyl-[acyl-carrier-protein] (acyl-ACP). This enzyme utilizes acyl-ACP as fatty acyl donor, but not acyl-CoA. The protein is Phosphate acyltransferase of Macrococcus caseolyticus (strain JCSC5402) (Macrococcoides caseolyticum).